A 130-amino-acid polypeptide reads, in one-letter code: Small ribosomal subunit protein uS9 (130 aa).

It belongs to the universal ribosomal protein uS9 family.

The chain is Small ribosomal subunit protein uS9 from Streptococcus thermophilus (strain CNRZ 1066).